Consider the following 170-residue polypeptide: Adenine phosphoribosyltransferase (170 aa).

The protein belongs to the purine/pyrimidine phosphoribosyltransferase family. In terms of assembly, homodimer.

The protein localises to the cytoplasm. The enzyme catalyses AMP + diphosphate = 5-phospho-alpha-D-ribose 1-diphosphate + adenine. The protein operates within purine metabolism; AMP biosynthesis via salvage pathway; AMP from adenine: step 1/1. Functionally, catalyzes a salvage reaction resulting in the formation of AMP, that is energically less costly than de novo synthesis. In Thermosipho africanus (strain TCF52B), this protein is Adenine phosphoribosyltransferase.